A 342-amino-acid polypeptide reads, in one-letter code: Phosphoribosylformylglycinamidine cyclo-ligase (342 aa).

Belongs to the AIR synthase family.

It localises to the cytoplasm. It catalyses the reaction 2-formamido-N(1)-(5-O-phospho-beta-D-ribosyl)acetamidine + ATP = 5-amino-1-(5-phospho-beta-D-ribosyl)imidazole + ADP + phosphate + H(+). It functions in the pathway purine metabolism; IMP biosynthesis via de novo pathway; 5-amino-1-(5-phospho-D-ribosyl)imidazole from N(2)-formyl-N(1)-(5-phospho-D-ribosyl)glycinamide: step 2/2. The sequence is that of Phosphoribosylformylglycinamidine cyclo-ligase from Staphylococcus aureus (strain MSSA476).